Consider the following 203-residue polypeptide: Guanylate kinase (203 aa).

The region spanning 3 to 181 (GSLFIVAAPS…AHTDLRAIVQ (179 aa)) is the Guanylate kinase-like domain. An ATP-binding site is contributed by 10–17 (APSGAGKT).

This sequence belongs to the guanylate kinase family.

The protein localises to the cytoplasm. It carries out the reaction GMP + ATP = GDP + ADP. Essential for recycling GMP and indirectly, cGMP. The protein is Guanylate kinase of Nitrosococcus oceani (strain ATCC 19707 / BCRC 17464 / JCM 30415 / NCIMB 11848 / C-107).